Reading from the N-terminus, the 560-residue chain is Zinc finger protein 619 (560 aa).

10 C2H2-type zinc fingers span residues 188-210, 216-238, 244-266, 272-294, 300-322, 328-350, 356-378, 384-406, 412-434, and 440-462; these read YKCGECGSYYNPHSDFHLHQRVH, YTCKECGKTFRYNSKLSRHQKIH, YSCEECGQAFSQNSHLLQHQKLH, YECTDCGKTFSYNSKLIRHQRIH, FKCKECGKAFSCSYDCIIHERIH, YECKECGKSLSSNSVLIQHQRIH, YECKECGKAFHRSSVFLQHQRFH, YKCNECWKTFSCSSRFIVHQRIH, YECQECGKTFSQKITLVQHQRVH, and YECKECGKAFRWNASFIQHQKWH.

This sequence belongs to the krueppel C2H2-type zinc-finger protein family.

It localises to the nucleus. Its function is as follows. May be involved in transcriptional regulation. The chain is Zinc finger protein 619 (ZNF619) from Homo sapiens (Human).